A 196-amino-acid chain; its full sequence is Imidazoleglycerol-phosphate dehydratase (196 aa).

Belongs to the imidazoleglycerol-phosphate dehydratase family.

It localises to the cytoplasm. The enzyme catalyses D-erythro-1-(imidazol-4-yl)glycerol 3-phosphate = 3-(imidazol-4-yl)-2-oxopropyl phosphate + H2O. It functions in the pathway amino-acid biosynthesis; L-histidine biosynthesis; L-histidine from 5-phospho-alpha-D-ribose 1-diphosphate: step 6/9. The protein is Imidazoleglycerol-phosphate dehydratase of Dehalococcoides mccartyi (strain CBDB1).